The sequence spans 288 residues: ATP synthase gamma chain (288 aa).

This sequence belongs to the ATPase gamma chain family. In terms of assembly, F-type ATPases have 2 components, CF(1) - the catalytic core - and CF(0) - the membrane proton channel. CF(1) has five subunits: alpha(3), beta(3), gamma(1), delta(1), epsilon(1). CF(0) has three main subunits: a, b and c.

It is found in the cell inner membrane. In terms of biological role, produces ATP from ADP in the presence of a proton gradient across the membrane. The gamma chain is believed to be important in regulating ATPase activity and the flow of protons through the CF(0) complex. This Aliivibrio salmonicida (strain LFI1238) (Vibrio salmonicida (strain LFI1238)) protein is ATP synthase gamma chain.